We begin with the raw amino-acid sequence, 474 residues long: Methylenetetrahydrofolate--tRNA-(uracil-5-)-methyltransferase TrmFO (474 aa).

Residue 13–18 coordinates FAD; that stretch reads GGGLAG.

This sequence belongs to the MnmG family. TrmFO subfamily. Requires FAD as cofactor.

It is found in the cytoplasm. It carries out the reaction uridine(54) in tRNA + (6R)-5,10-methylene-5,6,7,8-tetrahydrofolate + NADH + H(+) = 5-methyluridine(54) in tRNA + (6S)-5,6,7,8-tetrahydrofolate + NAD(+). It catalyses the reaction uridine(54) in tRNA + (6R)-5,10-methylene-5,6,7,8-tetrahydrofolate + NADPH + H(+) = 5-methyluridine(54) in tRNA + (6S)-5,6,7,8-tetrahydrofolate + NADP(+). In terms of biological role, catalyzes the folate-dependent formation of 5-methyl-uridine at position 54 (M-5-U54) in all tRNAs. The polypeptide is Methylenetetrahydrofolate--tRNA-(uracil-5-)-methyltransferase TrmFO (Bartonella tribocorum (strain CIP 105476 / IBS 506)).